The sequence spans 146 residues: Acetyl-CoA decarbonylase/synthase complex subunit epsilon (146 aa).

It belongs to the CdhB family. In terms of assembly, heterotetramer of two alpha and two epsilon subunits. The ACDS complex is made up of alpha, epsilon, beta, gamma and delta subunits with a probable stoichiometry of (alpha(2)epsilon(2))(4)-beta(8)-(gamma(1)delta(1))(8).

Functionally, part of a complex that catalyzes the reversible cleavage of acetyl-CoA, allowing autotrophic growth from CO(2). The alpha-epsilon subcomponent functions as a carbon monoxide dehydrogenase. The precise role of the epsilon subunit is unclear; it may have a stabilizing role within the alpha(2)epsilon(2) component and/or be involved in electron transfer to FAD during a potential FAD-mediated CO oxidation. The polypeptide is Acetyl-CoA decarbonylase/synthase complex subunit epsilon (Methanocaldococcus jannaschii (strain ATCC 43067 / DSM 2661 / JAL-1 / JCM 10045 / NBRC 100440) (Methanococcus jannaschii)).